Reading from the N-terminus, the 517-residue chain is GMP synthase [glutamine-hydrolyzing] (517 aa).

Positions 9–199 (RILILDFGSQ…VLNVCGCEGL (191 aa)) constitute a Glutamine amidotransferase type-1 domain. C86 functions as the Nucleophile in the catalytic mechanism. Catalysis depends on residues H173 and E175. The region spanning 200–392 (WTSASIIEDA…LGLPYNMLYR (193 aa)) is the GMPS ATP-PPase domain. 227 to 233 (SGGVDSS) provides a ligand contact to ATP.

Homodimer.

The catalysed reaction is XMP + L-glutamine + ATP + H2O = GMP + L-glutamate + AMP + diphosphate + 2 H(+). The protein operates within purine metabolism; GMP biosynthesis; GMP from XMP (L-Gln route): step 1/1. In terms of biological role, catalyzes the synthesis of GMP from XMP. This chain is GMP synthase [glutamine-hydrolyzing], found in Aliivibrio fischeri (strain MJ11) (Vibrio fischeri).